Here is a 182-residue protein sequence, read N- to C-terminus: Early upstream open reading frame (182 aa).

Belongs to the EUO family.

The protein is Early upstream open reading frame of Chlamydophila psittaci (strain ATCC VR-125 / 6BC) (Chlamydia psittaci).